Consider the following 66-residue polypeptide: ATP synthase F(0) complex subunit 8 (66 aa).

Residues isoleucine 8–leucine 24 traverse the membrane as a helical segment. N6-acetyllysine; alternate is present on lysine 54. Lysine 54 is subject to N6-succinyllysine; alternate. At lysine 57 the chain carries N6-acetyllysine.

The protein belongs to the ATPase protein 8 family. As to quaternary structure, component of the ATP synthase complex composed at least of ATP5F1A/subunit alpha, ATP5F1B/subunit beta, ATP5MC1/subunit c (homooctomer), MT-ATP6/subunit a, MT-ATP8/subunit 8, ATP5ME/subunit e, ATP5MF/subunit f, ATP5MG/subunit g, ATP5MK/subunit k, ATP5MJ/subunit j, ATP5F1C/subunit gamma, ATP5F1D/subunit delta, ATP5F1E/subunit epsilon, ATP5PF/subunit F6, ATP5PB/subunit b, ATP5PD/subunit d, ATP5PO/subunit OSCP. ATP synthase complex consists of a soluble F(1) head domain (subunits alpha(3) and beta(3)) - the catalytic core - and a membrane F(0) domain - the membrane proton channel (subunits c, a, 8, e, f, g, k and j). These two domains are linked by a central stalk (subunits gamma, delta, and epsilon) rotating inside the F1 region and a stationary peripheral stalk (subunits F6, b, d, and OSCP). Interacts with PRICKLE3.

Its subcellular location is the mitochondrion membrane. In terms of biological role, subunit 8, of the mitochondrial membrane ATP synthase complex (F(1)F(0) ATP synthase or Complex V) that produces ATP from ADP in the presence of a proton gradient across the membrane which is generated by electron transport complexes of the respiratory chain. ATP synthase complex consist of a soluble F(1) head domain - the catalytic core - and a membrane F(1) domain - the membrane proton channel. These two domains are linked by a central stalk rotating inside the F(1) region and a stationary peripheral stalk. During catalysis, ATP synthesis in the catalytic domain of F(1) is coupled via a rotary mechanism of the central stalk subunits to proton translocation. In vivo, can only synthesize ATP although its ATP hydrolase activity can be activated artificially in vitro. Part of the complex F(0) domain. The chain is ATP synthase F(0) complex subunit 8 from Mammuthus primigenius (Siberian woolly mammoth).